The primary structure comprises 120 residues: Large ribosomal subunit protein bL20 (120 aa).

The protein belongs to the bacterial ribosomal protein bL20 family.

Functionally, binds directly to 23S ribosomal RNA and is necessary for the in vitro assembly process of the 50S ribosomal subunit. It is not involved in the protein synthesizing functions of that subunit. This chain is Large ribosomal subunit protein bL20, found in Baumannia cicadellinicola subsp. Homalodisca coagulata.